Consider the following 282-residue polypeptide: Protein DOG1-like 3 (282 aa).

Residues 11–254 (EQLQKGCYYE…HEWGRVREEQ (244 aa)) form the DOG1 domain.

The sequence is that of Protein DOG1-like 3 from Arabidopsis thaliana (Mouse-ear cress).